The sequence spans 503 residues: ATP synthase subunit alpha (503 aa).

170 to 177 (GDRKTGKT) contributes to the ATP binding site.

It belongs to the ATPase alpha/beta chains family. In terms of assembly, F-type ATPases have 2 components, CF(1) - the catalytic core - and CF(0) - the membrane proton channel. CF(1) has five subunits: alpha(3), beta(3), gamma(1), delta(1), epsilon(1). CF(0) has four main subunits: a, b, b' and c.

Its subcellular location is the cellular thylakoid membrane. The catalysed reaction is ATP + H2O + 4 H(+)(in) = ADP + phosphate + 5 H(+)(out). In terms of biological role, produces ATP from ADP in the presence of a proton gradient across the membrane. The alpha chain is a regulatory subunit. The protein is ATP synthase subunit alpha of Gloeothece citriformis (strain PCC 7424) (Cyanothece sp. (strain PCC 7424)).